A 217-amino-acid chain; its full sequence is UPF0502 protein ETA_20480 (217 aa).

Residues 169-188 (GEVDESSRADGHHPDDHRGD) form a disordered region. The segment covering 173–188 (ESSRADGHHPDDHRGD) has biased composition (basic and acidic residues).

It belongs to the UPF0502 family.

In Erwinia tasmaniensis (strain DSM 17950 / CFBP 7177 / CIP 109463 / NCPPB 4357 / Et1/99), this protein is UPF0502 protein ETA_20480.